A 295-amino-acid chain; its full sequence is GTPase Era (295 aa).

An Era-type G domain is found at 3–171 (KSGFITVIGR…LELMKKYLPE (169 aa)). The segment at 11 to 18 (GRPNVGKS) is G1. 11–18 (GRPNVGKS) is a binding site for GTP. Residues 37 to 41 (QTTRN) form a G2 region. Residues 58–61 (DTPG) form a G3 region. Residues 58 to 62 (DTPGM) and 120 to 123 (NKID) contribute to the GTP site. The tract at residues 120 to 123 (NKID) is G4. The segment at 150-152 (ISA) is G5. The KH type-2 domain maps to 202–279 (LSEEVPHGIA…SLKVWVKVKK (78 aa)).

The protein belongs to the TRAFAC class TrmE-Era-EngA-EngB-Septin-like GTPase superfamily. Era GTPase family. Monomer.

The protein localises to the cytoplasm. It localises to the cell membrane. In terms of biological role, an essential GTPase that binds both GDP and GTP, with rapid nucleotide exchange. Plays a role in 16S rRNA processing and 30S ribosomal subunit biogenesis and possibly also in cell cycle regulation and energy metabolism. In Clostridium tetani (strain Massachusetts / E88), this protein is GTPase Era.